Consider the following 211-residue polypeptide: 2,3-bisphosphoglycerate-dependent phosphoglycerate mutase (211 aa).

Substrate contacts are provided by residues Arg9–Asn16, Thr22–Gly23, Arg61, Glu88–Tyr91, Lys99, Arg115–Arg116, and Gly159–Asn160. His10 serves as the catalytic Tele-phosphohistidine intermediate. Glu88 acts as the Proton donor/acceptor in catalysis.

It belongs to the phosphoglycerate mutase family. BPG-dependent PGAM subfamily. Homodimer.

The catalysed reaction is (2R)-2-phosphoglycerate = (2R)-3-phosphoglycerate. It participates in carbohydrate degradation; glycolysis; pyruvate from D-glyceraldehyde 3-phosphate: step 3/5. In terms of biological role, catalyzes the interconversion of 2-phosphoglycerate and 3-phosphoglycerate. The sequence is that of 2,3-bisphosphoglycerate-dependent phosphoglycerate mutase from Allorhizobium ampelinum (strain ATCC BAA-846 / DSM 112012 / S4) (Agrobacterium vitis (strain S4)).